The primary structure comprises 468 residues: Glutamate--tRNA ligase (468 aa).

The 'HIGH' region signature appears at 8 to 18; sequence PSPTGFLHVGG. 4 residues coordinate Zn(2+): C97, C99, C124, and D126. The short motif at 236 to 240 is the 'KMSKS' region element; sequence KLSKR. K239 provides a ligand contact to ATP.

Belongs to the class-I aminoacyl-tRNA synthetase family. Glutamate--tRNA ligase type 1 subfamily. Monomer. Zn(2+) is required as a cofactor.

It localises to the cytoplasm. It catalyses the reaction tRNA(Glu) + L-glutamate + ATP = L-glutamyl-tRNA(Glu) + AMP + diphosphate. In terms of biological role, catalyzes the attachment of glutamate to tRNA(Glu) in a two-step reaction: glutamate is first activated by ATP to form Glu-AMP and then transferred to the acceptor end of tRNA(Glu). In Francisella tularensis subsp. novicida (strain U112), this protein is Glutamate--tRNA ligase.